A 464-amino-acid polypeptide reads, in one-letter code: 3-isopropylmalate dehydratase large subunit (464 aa).

[4Fe-4S] cluster is bound by residues cysteine 337, cysteine 397, and cysteine 400.

Belongs to the aconitase/IPM isomerase family. LeuC type 1 subfamily. Heterodimer of LeuC and LeuD. [4Fe-4S] cluster is required as a cofactor.

The enzyme catalyses (2R,3S)-3-isopropylmalate = (2S)-2-isopropylmalate. It functions in the pathway amino-acid biosynthesis; L-leucine biosynthesis; L-leucine from 3-methyl-2-oxobutanoate: step 2/4. In terms of biological role, catalyzes the isomerization between 2-isopropylmalate and 3-isopropylmalate, via the formation of 2-isopropylmaleate. This chain is 3-isopropylmalate dehydratase large subunit, found in Bacillus cereus (strain ZK / E33L).